Here is a 402-residue protein sequence, read N- to C-terminus: E3 ubiquitin-protein ligase makorin-2 (402 aa).

3 consecutive C3H1-type zinc fingers follow at residues 2 to 29, 31 to 58, and 141 to 168; these read TTKQ…HDPS, SKPS…HVKL, and QDLP…HGDK. Positions 169–198 are makorin-type Cys-His; that stretch reads CEVCGLQVLDPHNPEQRSMHEKMCLLAFEA. An RING-type zinc finger spans residues 214-268; the sequence is CSICMEVVVQKMNPSDRRFGILSSCCHVFCLACIRKWRCTRNFSNKIIKSCPECR. The C3H1-type 4 zinc finger occupies 297-326; that stretch reads GVGKKPCKYFDQGRGSCPFGGKCLYLHALP.

It is found in the cytoplasm. The protein localises to the nucleus. The catalysed reaction is S-ubiquitinyl-[E2 ubiquitin-conjugating enzyme]-L-cysteine + [acceptor protein]-L-lysine = [E2 ubiquitin-conjugating enzyme]-L-cysteine + N(6)-ubiquitinyl-[acceptor protein]-L-lysine.. It functions in the pathway protein modification; protein ubiquitination. E3 ubiquitin ligase catalyzing the covalent attachment of ubiquitin moieties onto substrate proteins. Inhibits neurogenesis and axis formation during embryonic development by modulating the phosphatidylinositol 3-kinase (PI3K) pathway. Acts downstream of PI3K and akt1 to up-regulate gsk3b mRNA expression. This chain is E3 ubiquitin-protein ligase makorin-2, found in Takifugu rubripes (Japanese pufferfish).